A 273-amino-acid chain; its full sequence is Mitochondrial inner membrane protease ATP23 (273 aa).

Polar residues predominate over residues 1-11; it reads MASPQDNTPSG. Positions 1–33 are disordered; sequence MASPQDNTPSGATPKPQTHEETPDQVKLRINGG. Over residues 17–27 the composition is skewed to basic and acidic residues; the sequence is QTHEETPDQVK. Histidine 170 is a binding site for a divalent metal cation. Glutamate 171 is an active-site residue. Histidine 174 provides a ligand contact to a divalent metal cation.

The protein belongs to the peptidase M76 family.

Its subcellular location is the mitochondrion inner membrane. Functionally, has a dual role in the assembly of mitochondrial ATPase. Acts as a protease that removes N-terminal residues of mitochondrial ATPase CF(0) subunit 6 at the intermembrane space side. Also involved in the correct assembly of the membrane-embedded ATPase CF(0) particle, probably mediating association of subunit 6 with the subunit 9 ring. This is Mitochondrial inner membrane protease ATP23 (ATP23) from Pyricularia oryzae (strain 70-15 / ATCC MYA-4617 / FGSC 8958) (Rice blast fungus).